A 323-amino-acid polypeptide reads, in one-letter code: HPr kinase/phosphorylase (323 aa).

Active-site residues include H146 and K167. 161-168 (GESGLGKS) serves as a coordination point for ATP. Residue S168 participates in Mg(2+) binding. The Proton acceptor; for phosphorylation activity. Proton donor; for dephosphorylation activity role is filled by D185. The segment at 209-218 (LEVRGLGLLD) is important for the catalytic mechanism of both phosphorylation and dephosphorylation. A Mg(2+)-binding site is contributed by E210. Residue R250 is part of the active site. Residues 271–276 (QVAAGR) are important for the catalytic mechanism of dephosphorylation.

It belongs to the HPrK/P family. In terms of assembly, homohexamer. Requires Mg(2+) as cofactor.

The catalysed reaction is [HPr protein]-L-serine + ATP = [HPr protein]-O-phospho-L-serine + ADP + H(+). It catalyses the reaction [HPr protein]-O-phospho-L-serine + phosphate + H(+) = [HPr protein]-L-serine + diphosphate. Its function is as follows. Catalyzes the ATP- as well as the pyrophosphate-dependent phosphorylation of a specific serine residue in HPr, a phosphocarrier protein of the phosphoenolpyruvate-dependent sugar phosphotransferase system (PTS). HprK/P also catalyzes the pyrophosphate-producing, inorganic phosphate-dependent dephosphorylation (phosphorolysis) of seryl-phosphorylated HPr (P-Ser-HPr). This is HPr kinase/phosphorylase from Cupriavidus pinatubonensis (strain JMP 134 / LMG 1197) (Cupriavidus necator (strain JMP 134)).